The chain runs to 422 residues: Glycine amidinotransferase, mitochondrial (422 aa).

Active-site residues include Asp253 and His302. Cys406 acts as the Amidino-cysteine intermediate in catalysis.

This sequence belongs to the amidinotransferase family. In terms of assembly, homodimer. As to expression, strongly expressed in neurons and glia of the brain, the lamina propria, submucosa and serosa of the small intestine, in oocytes and on the fringes of the pancreas. Not expressed in the retina, eye lens, heart or bulbus arteriosus. Expressed in the yolk syncytial layer in gastrula stage embryos, in the yolk syncytial layer and mature somites in early segmentation embryos and in the yolk syncytial layer and the liver of long-pec stage (48 hours post-fertilization) embryos.

It localises to the mitochondrion inner membrane. The enzyme catalyses L-arginine + glycine = guanidinoacetate + L-ornithine. Its pathway is amine and polyamine biosynthesis; creatine biosynthesis; creatine from L-arginine and glycine: step 1/2. Functionally, catalyzes the biosynthesis of guanidinoacetate, the immediate precursor of creatine. Creatine plays a vital role in energy metabolism in muscle tissues. May play a role in embryonic and central nervous system development. The chain is Glycine amidinotransferase, mitochondrial from Danio rerio (Zebrafish).